Here is a 984-residue protein sequence, read N- to C-terminus: MYCBP-associated protein (984 aa).

2 disordered regions span residues 61–88 (LEAS…EEPE) and 218–240 (GESK…PQHN). Basic and acidic residues predominate over residues 218 to 231 (GESKQKAPKEEKRP). Thr-613 is subject to Phosphothreonine. Ser-619 is modified (phosphoserine). Disordered regions lie at residues 693 to 729 (SPIS…KSIM) and 842 to 917 (PEEQ…ASQD). The span at 862-910 (AGKEERKGAAQEKKQLGIKDKEDKKGAKLLGKEDRPNSKKHKAKDDKKV) shows a compositional bias: basic and acidic residues.

In terms of assembly, interacts with MYCBP. As to expression, expressed specifically in testis.

It localises to the cytoplasm. It is found in the membrane. Functionally, may play a role in spermatogenesis. May be involved in synaptic processes. The chain is MYCBP-associated protein from Homo sapiens (Human).